The chain runs to 153 residues: Natriuretic peptides A (153 aa).

The N-terminal stretch at 1-25 is a signal peptide; that stretch reads MGPFSTITVSFLFCLAFWHPDQIGA. 2 propeptides span residues 26-123 and 93-103; these read NPVY…TAPR and DGEALGRSTWE. Residues 54–101 form a disordered region; the sequence is EDEAVPPQALSEQSDEAGAALSPLPEVPPWTGEVSPAQRDGEALGRST. The residue at position 129 (Ser129) is a Phosphoserine. Cys130 and Cys146 form a disulfide bridge. The important for degradation of atrial natriuretic peptide by IDE stretch occupies residues 147–151; sequence NSFRY.

It belongs to the natriuretic peptide family. Homodimer; disulfide-linked antiparallel dimer. The precursor molecule is proteolytically cleaved by CORIN at Arg-123 to produce the atrial natriuretic peptide. Undergoes further proteolytic cleavage by unknown proteases to give rise to long-acting natriuretic peptide, vessel dilator and kaliuretic peptide. Additional processing gives rise to the auriculin and atriopeptin peptides. In the kidneys, alternative processing by an unknown protease results in the peptide urodilatin. Post-translationally, cleavage by MME initiates degradation of the factor and thereby regulates its activity. Degradation by IDE results in reduced activation of NPR1 (in vitro). During IDE degradation, the resulting products can temporarily stimulate NPR2 to produce cGMP, before the fragments are completely degraded and inactivated by IDE (in vitro). In terms of processing, degraded by IDE. Phosphorylation on Ser-129 decreases vasorelaxant activity.

The protein resides in the secreted. It is found in the perikaryon. It localises to the cell projection. Its function is as follows. Hormone that plays a key role in mediating cardio-renal homeostasis, and is involved in vascular remodeling and regulating energy metabolism. Acts by specifically binding and stimulating NPR1 to produce cGMP, which in turn activates effector proteins, such as PRKG1, that drive various biological responses. Regulates vasodilation, natriuresis, diuresis and aldosterone synthesis and is therefore essential for regulating blood pressure, controlling the extracellular fluid volume and maintaining the fluid-electrolyte balance. Also involved in inhibiting cardiac remodeling and cardiac hypertrophy by inducing cardiomyocyte apoptosis and attenuating the growth of cardiomyocytes and fibroblasts. Plays a role in female pregnancy by promoting trophoblast invasion and spiral artery remodeling in uterus, and thus prevents pregnancy-induced hypertension. In adipose tissue, acts in various cGMP- and PKG-dependent pathways to regulate lipid metabolism and energy homeostasis. This includes up-regulating lipid metabolism and mitochondrial oxygen utilization by activating the AMP-activated protein kinase (AMPK), and increasing energy expenditure by acting via MAPK11 to promote the UCP1-dependent thermogenesis of brown adipose tissue. Binds the clearance receptor NPR3 which removes the hormone from circulation. May have a role in cardio-renal homeostasis through regulation of natriuresis, diuresis, vasodilation, and inhibiting aldosterone synthesis. In vitro, promotes the production of cGMP and induces vasodilation. May promote natriuresis, at least in part, by enhancing prostaglandin E2 synthesis resulting in the inhibition of renal Na+-K+-ATPase. However reports on the involvement of this peptide in mammal blood volume and blood pressure homeostasis are conflicting; according to a report, in vivo it is not sufficient to activate cGMP and does not inhibit collecting duct transport nor effect diuresis and natriuresis. Appears to bind to specific receptors that are distinct from the receptors bound by atrial natriuretic peptide and vessel dilator. Possibly enhances protein excretion in urine by decreasing proximal tubular protein reabsorption. Functionally, may have a role in cardio-renal homeostasis through regulation of natriuresis, diuresis, and vasodilation. In vitro, promotes the production of cGMP and induces vasodilation. May promote natriuresis, at least in part, by enhancing prostaglandin E2 synthesis resulting in the inhibition of renal Na+-K+-ATPase. However reports on the involvement of this peptide in mammal blood volume and blood pressure homeostasis are conflicting; according to a report it is not sufficient to activate cGMP and does not inhibit collecting duct transport nor effect diuresis and natriuresis. Appears to bind to specific receptors that are distinct from the receptors bound by the atrial natriuretic and long-acting natriuretic peptides. Possibly functions in protein excretion in urine by maintaining the integrity of the proximal tubules and enhancing protein excretion by decreasing proximal tubular protein reabsorption. In terms of biological role, may have a role in cardio-renal homeostasis through regulation of diuresis and inhibiting aldosterone synthesis. In vitro, promotes the production of cGMP and induces vasodilation. May promote natriuresis, at least in part, by enhancing prostaglandin E2 synthesis resulting in the inhibition of renal Na+-K+-ATPase. May have a role in potassium excretion but not sodium excretion (natriuresis). Possibly enhances protein excretion in urine by decreasing proximal tubular protein reabsorption. Its function is as follows. Hormone produced in the kidneys that appears to be important for maintaining cardio-renal homeostasis. Mediates vasodilation, natriuresis and diuresis primarily in the renal system, in order to maintain the extracellular fluid volume and control the fluid-electrolyte balance. Specifically binds and stimulates cGMP production by renal transmembrane receptors, likely NPR1. Urodilatin not ANP, may be the natriuretic peptide responsible for the regulation of sodium and water homeostasis in the kidney. May have a role in cardio-renal homeostasis through regulation of natriuresis and vasodilation. In vivo promotes natriuresis and in vitro, vasodilates renal artery strips. Functionally, may have a role in cardio-renal homeostasis through regulation of regulation of natriuresis and vasodilation. In vivo promotes natriuresis. In vitro, vasodilates intestinal smooth muscle but not smooth muscle strips. In terms of biological role, may have a role in cardio-renal homeostasis through regulation of natriuresis and vasodilation. In vivo promotes natriuresis. In vitro, selectively vasodilates intestinal and vascular smooth muscle strips. Its function is as follows. May have a role in cardio-renal homeostasis through regulation of natriuresis and vasodilation. In vivo promotes natriuresis. In vitro, selectively vasodilates intestinal smooth muscle but not vascular smooth muscle strips. This chain is Natriuretic peptides A (NPPA), found in Oryctolagus cuniculus (Rabbit).